Consider the following 214-residue polypeptide: Adenylate kinase (214 aa).

An ATP-binding site is contributed by 10–15 (GAGKGT). The NMP stretch occupies residues 30–59 (STGDMLRAAVKAGTPLGLEAKKVMDAGQLV). AMP contacts are provided by residues Thr-31, Arg-36, 57–59 (QLV), 85–88 (GFPR), and Gln-92. The tract at residues 122 to 159 (GRRVHPGSGRVYHVVFNPPKVEGKDDVTGEDLAIRPDD) is LID. ATP-binding positions include Arg-123 and 132–133 (VY). The AMP site is built by Arg-156 and Arg-167. Gln-200 contributes to the ATP binding site.

Belongs to the adenylate kinase family. As to quaternary structure, monomer.

It localises to the cytoplasm. It catalyses the reaction AMP + ATP = 2 ADP. The protein operates within purine metabolism; AMP biosynthesis via salvage pathway; AMP from ADP: step 1/1. Functionally, catalyzes the reversible transfer of the terminal phosphate group between ATP and AMP. Plays an important role in cellular energy homeostasis and in adenine nucleotide metabolism. The protein is Adenylate kinase of Shewanella sp. (strain ANA-3).